The chain runs to 61 residues: Cytotoxin homolog 3 (61 aa).

4 disulfides stabilise this stretch: Cys3–Cys22, Cys15–Cys39, Cys43–Cys54, and Cys55–Cys60.

The protein belongs to the three-finger toxin family. Short-chain subfamily. Orphan group XV sub-subfamily. In terms of tissue distribution, expressed by the venom gland.

The protein resides in the secreted. It localises to the target cell membrane. Its function is as follows. Has low cytotoxic activity. This Naja melanoleuca (Forest cobra) protein is Cytotoxin homolog 3.